Reading from the N-terminus, the 31-residue chain is Conotoxin (31 aa).

Belongs to the conotoxin S superfamily. Post-translationally, contains 5 disulfide bonds. Expressed by the venom duct.

The protein resides in the secreted. In Conus striatus (Striated cone), this protein is Conotoxin.